We begin with the raw amino-acid sequence, 391 residues long: Elongation factor Tu (391 aa).

One can recognise a tr-type G domain in the interval 10–201; sequence KPHVNIGTIG…AVDEYIPTPA (192 aa). The interval 19 to 26 is G1; it reads GHVDHGKT. 19 to 26 serves as a coordination point for GTP; the sequence is GHVDHGKT. T26 is a binding site for Mg(2+). Residues 55 to 59 are G2; it reads GITIS. Residues 76 to 79 are G3; it reads DCPG. GTP is bound by residues 76–80 and 131–134; these read DCPGH and NKVD. The interval 131–134 is G4; sequence NKVD. The G5 stretch occupies residues 169-171; the sequence is SAL.

This sequence belongs to the TRAFAC class translation factor GTPase superfamily. Classic translation factor GTPase family. EF-Tu/EF-1A subfamily. As to quaternary structure, monomer.

The protein localises to the cytoplasm. It carries out the reaction GTP + H2O = GDP + phosphate + H(+). Its function is as follows. GTP hydrolase that promotes the GTP-dependent binding of aminoacyl-tRNA to the A-site of ribosomes during protein biosynthesis. The sequence is that of Elongation factor Tu from Cereibacter sphaeroides (strain ATCC 17025 / ATH 2.4.3) (Rhodobacter sphaeroides).